The chain runs to 308 residues: Solute carrier family 25 member 47 (308 aa).

3 Solcar repeats span residues 1–80 (MDFV…CLAH), 93–206 (PTKA…LCEW), and 215–302 (PDVP…VLRL). A run of 6 helical transmembrane segments spans residues 3–23 (FVAG…LDTV), 49–69 (VWGF…VSSV), 98–116 (ITLS…TSPT), 190–210 (GHSF…LSPA), 217–237 (VPGV…VATP), and 273–293 (VLFK…MVVF).

The protein belongs to the mitochondrial carrier (TC 2.A.29) family. In terms of tissue distribution, specifically expressed in liver.

The protein localises to the mitochondrion inner membrane. It localises to the mitochondrion outer membrane. The enzyme catalyses NAD(+)(in) = NAD(+)(out). It carries out the reaction acetyl-CoA(in) = acetyl-CoA(out). Its function is as follows. Mitochondrial NAD(+) transporter that acts as a 'metabolic gate' in hepatic lipogenesis. Provides NAD(+) substrate to mitochondrial SIRT3 deacetylase and enables its NAD(+)-dependent activities in mitochondrial energy metabolism. This triggers downstream activation of PRKAA1/AMPK-alpha signaling cascade that negatively regulates sterol regulatory element-binding protein (SREBP) transcriptional activities and ATP-consuming lipogenesis to restore cellular energy balance. May transport other mitochondrial metabolites having an aromatic nucleotide and phosphate groups, such as acetyl-CoA. Does not transport amino acids. The transport mechanism remains to be elucidated. The protein is Solute carrier family 25 member 47 of Homo sapiens (Human).